The sequence spans 399 residues: Cell division protein DivIB (399 aa).

Disordered stretches follow at residues 1–23 (MSKDKKNEDKETLEELKELSEWQ) and 35–119 (EEEA…ATKE). At 1-133 (MSKDKKNEDK…AKIPGIHILR (133 aa)) the chain is on the cytoplasmic side. Basic and acidic residues-rich tracts occupy residues 35–65 (EEEAALAEEKEKERQARMGEESEKSEDKQDQ) and 75–119 (ESAK…ATKE). Residues 134 to 154 (AFTILFPSLLLLFVSAYLLSP) traverse the membrane as a helical segment. The Extracellular portion of the chain corresponds to 155-399 (YATMKDIRVE…NQTTQRSSRR (245 aa)). One can recognise a POTRA domain in the interval 156 to 226 (ATMKDIRVEG…TKFTIKVKEY (71 aa)). The span at 364–388 (KAKQEAKEAEKKQEEEQKKQEEESN) shows a compositional bias: basic and acidic residues. The interval 364–399 (KAKQEAKEAEKKQEEEQKKQEEESNRNQTTQRSSRR) is disordered. The span at 389 to 399 (RNQTTQRSSRR) shows a compositional bias: polar residues.

Belongs to the FtsQ/DivIB family. DivIB subfamily.

Its subcellular location is the cell membrane. Its function is as follows. Cell division protein that may be involved in stabilizing or promoting the assembly of the division complex. The polypeptide is Cell division protein DivIB (Streptococcus pneumoniae serotype 4 (strain ATCC BAA-334 / TIGR4)).